We begin with the raw amino-acid sequence, 368 residues long: Spermidine/putrescine import ATP-binding protein PotA (368 aa).

Residues 8–238 (IELKNVSKIF…PVNLFVARFV (231 aa)) enclose the ABC transporter domain. Residue 40 to 47 (GPSGCGKT) coordinates ATP.

Belongs to the ABC transporter superfamily. Spermidine/putrescine importer (TC 3.A.1.11.1) family. The complex is composed of two ATP-binding proteins (PotA), two transmembrane proteins (PotB and PotC) and a solute-binding protein (PotD).

The protein resides in the cell membrane. The catalysed reaction is ATP + H2O + polyamine-[polyamine-binding protein]Side 1 = ADP + phosphate + polyamineSide 2 + [polyamine-binding protein]Side 1.. Functionally, part of the ABC transporter complex PotABCD involved in spermidine/putrescine import. Responsible for energy coupling to the transport system. The sequence is that of Spermidine/putrescine import ATP-binding protein PotA from Lawsonia intracellularis (strain PHE/MN1-00).